A 39-amino-acid polypeptide reads, in one-letter code: Photosystem II reaction center protein Y (39 aa).

The chain crosses the membrane as a helical span at residues 4-24 (RVIVVVSPLLIAATWAAINIG).

It belongs to the PsbY family. As to quaternary structure, PSII is composed of 1 copy each of membrane proteins PsbA, PsbB, PsbC, PsbD, PsbE, PsbF, PsbH, PsbI, PsbJ, PsbK, PsbL, PsbM, PsbT, PsbX, PsbY, PsbZ, Psb30/Ycf12, peripheral proteins PsbO, CyanoQ (PsbQ), PsbU, PsbV and a large number of cofactors. It forms dimeric complexes.

The protein localises to the cellular thylakoid membrane. Loosely associated component of the core of photosystem II (PSII), it is not always seen in crystals. PSII is a light-driven water plastoquinone oxidoreductase, using light energy to abstract electrons from H(2)O, generating a proton gradient subsequently used for ATP formation. This chain is Photosystem II reaction center protein Y, found in Synechocystis sp. (strain ATCC 27184 / PCC 6803 / Kazusa).